The chain runs to 248 residues: Transmembrane protein 182 (248 aa).

The first 26 residues, 1–26, serve as a signal peptide directing secretion; sequence MKIHVAGFFAGLFGALATLFILLSFG. Residues 27–136 are Extracellular-facing; it reads TDYWLLASET…IIYRGFWSVS (110 aa). Residues Asn66 and Asn119 are each glycosylated (N-linked (GlcNAc...) asparagine). The helical transmembrane segment at 137–157 threads the bilayer; sequence MLVGVAAVVAGGFIIICAAPF. The Cytoplasmic segment spans residues 158 to 167; the sequence is ASHRLYKAGG. The chain crosses the membrane as a helical span at residues 168 to 188; it reads GLYLISGFFVLVVTAMYVIWI. Topologically, residues 189–218 are extracellular; it reads DVLDVISLYTEYQKLNKCADFELNKTYGLS. A glycan (N-linked (GlcNAc...) asparagine) is linked at Asn212. A helical transmembrane segment spans residues 219 to 239; it reads FMFAPVGVFFCFLSGLLFLVI. Topologically, residues 240 to 248 are cytoplasmic; that stretch reads GRTVHHQYN.

This sequence belongs to the TMEM182 family.

It localises to the cell membrane. May negatively regulate myogenesis and skeletal muscle regeneration. This is Transmembrane protein 182 (tmem182a) from Danio rerio (Zebrafish).